We begin with the raw amino-acid sequence, 342 residues long: tRNA N6-adenosine threonylcarbamoyltransferase (342 aa).

Fe cation is bound by residues His-115 and His-119. Residues 137–141 (IVSGG), Asp-170, Gly-183, Asp-187, and Asn-276 contribute to the substrate site. Asp-304 contributes to the Fe cation binding site.

It belongs to the KAE1 / TsaD family. The cofactor is Fe(2+).

It is found in the cytoplasm. It carries out the reaction L-threonylcarbamoyladenylate + adenosine(37) in tRNA = N(6)-L-threonylcarbamoyladenosine(37) in tRNA + AMP + H(+). In terms of biological role, required for the formation of a threonylcarbamoyl group on adenosine at position 37 (t(6)A37) in tRNAs that read codons beginning with adenine. Is involved in the transfer of the threonylcarbamoyl moiety of threonylcarbamoyl-AMP (TC-AMP) to the N6 group of A37, together with TsaE and TsaB. TsaD likely plays a direct catalytic role in this reaction. The sequence is that of tRNA N6-adenosine threonylcarbamoyltransferase from Staphylococcus saprophyticus subsp. saprophyticus (strain ATCC 15305 / DSM 20229 / NCIMB 8711 / NCTC 7292 / S-41).